A 504-amino-acid polypeptide reads, in one-letter code: 2-isopropylmalate synthase (504 aa).

One can recognise a Pyruvate carboxyltransferase domain in the interval 6–267 (IIIFDTTLRD…YTGIISKEIY (262 aa)). Mn(2+) contacts are provided by aspartate 15, histidine 201, histidine 203, and asparagine 237. Positions 391–504 (EITDLLQSSG…LNSYLRIHKN (114 aa)) are regulatory domain.

This sequence belongs to the alpha-IPM synthase/homocitrate synthase family. LeuA type 1 subfamily. Homodimer. It depends on Mn(2+) as a cofactor.

It is found in the cytoplasm. It catalyses the reaction 3-methyl-2-oxobutanoate + acetyl-CoA + H2O = (2S)-2-isopropylmalate + CoA + H(+). It participates in amino-acid biosynthesis; L-leucine biosynthesis; L-leucine from 3-methyl-2-oxobutanoate: step 1/4. Catalyzes the condensation of the acetyl group of acetyl-CoA with 3-methyl-2-oxobutanoate (2-ketoisovalerate) to form 3-carboxy-3-hydroxy-4-methylpentanoate (2-isopropylmalate). The polypeptide is 2-isopropylmalate synthase (Campylobacter concisus (strain 13826)).